Reading from the N-terminus, the 79-residue chain is UPF0337 protein YhjA (79 aa).

The interval 1–30 (MALNDKLDATKDKVSGKVKETTGKVTGDEK) is disordered.

The protein belongs to the UPF0337 (CsbD) family.

In Lactococcus lactis subsp. lactis (strain IL1403) (Streptococcus lactis), this protein is UPF0337 protein YhjA (yhjA).